The sequence spans 345 residues: RNA pseudouridine synthase 1 (345 aa).

Residue aspartate 134 is part of the active site.

Belongs to the pseudouridine synthase RluA family.

It catalyses the reaction a uridine in RNA = a pseudouridine in RNA. The protein is RNA pseudouridine synthase 1 of Oryza sativa subsp. japonica (Rice).